Here is a 273-residue protein sequence, read N- to C-terminus: Undecaprenyl-diphosphatase (273 aa).

7 helical membrane-spanning segments follow: residues serine 39–phenylalanine 59, leucine 86–threonine 106, leucine 117–glycine 137, valine 146–valine 166, phenylalanine 189–leucine 209, leucine 220–leucine 240, and isoleucine 249–threonine 269.

It belongs to the UppP family.

It is found in the cell inner membrane. The catalysed reaction is di-trans,octa-cis-undecaprenyl diphosphate + H2O = di-trans,octa-cis-undecaprenyl phosphate + phosphate + H(+). Catalyzes the dephosphorylation of undecaprenyl diphosphate (UPP). Confers resistance to bacitracin. This Pelobacter propionicus (strain DSM 2379 / NBRC 103807 / OttBd1) protein is Undecaprenyl-diphosphatase.